The following is a 439-amino-acid chain: 23S rRNA (uracil(1939)-C(5))-methyltransferase RlmD (439 aa).

A TRAM domain is found at 10 to 68 (QKKLRAAFTTIVQDLDYQGLGVAKIQGKTWFIENALPQEQVQVQVIEEKRQYGLGRVQK). 4 residues coordinate [4Fe-4S] cluster: cysteine 81, cysteine 87, cysteine 90, and cysteine 168. 6 residues coordinate S-adenosyl-L-methionine: glutamine 271, phenylalanine 300, asparagine 305, glutamate 321, aspartate 348, and aspartate 369. Residue cysteine 395 is the Nucleophile of the active site.

Belongs to the class I-like SAM-binding methyltransferase superfamily. RNA M5U methyltransferase family. RlmD subfamily.

It catalyses the reaction uridine(1939) in 23S rRNA + S-adenosyl-L-methionine = 5-methyluridine(1939) in 23S rRNA + S-adenosyl-L-homocysteine + H(+). In terms of biological role, catalyzes the formation of 5-methyl-uridine at position 1939 (m5U1939) in 23S rRNA. The polypeptide is 23S rRNA (uracil(1939)-C(5))-methyltransferase RlmD (Histophilus somni (strain 129Pt) (Haemophilus somnus)).